A 480-amino-acid polypeptide reads, in one-letter code: Aspartyl/glutamyl-tRNA(Asn/Gln) amidotransferase subunit B (480 aa).

It belongs to the GatB/GatE family. GatB subfamily. Heterotrimer of A, B and C subunits.

The enzyme catalyses L-glutamyl-tRNA(Gln) + L-glutamine + ATP + H2O = L-glutaminyl-tRNA(Gln) + L-glutamate + ADP + phosphate + H(+). It catalyses the reaction L-aspartyl-tRNA(Asn) + L-glutamine + ATP + H2O = L-asparaginyl-tRNA(Asn) + L-glutamate + ADP + phosphate + 2 H(+). Functionally, allows the formation of correctly charged Asn-tRNA(Asn) or Gln-tRNA(Gln) through the transamidation of misacylated Asp-tRNA(Asn) or Glu-tRNA(Gln) in organisms which lack either or both of asparaginyl-tRNA or glutaminyl-tRNA synthetases. The reaction takes place in the presence of glutamine and ATP through an activated phospho-Asp-tRNA(Asn) or phospho-Glu-tRNA(Gln). The chain is Aspartyl/glutamyl-tRNA(Asn/Gln) amidotransferase subunit B from Streptococcus pneumoniae (strain CGSP14).